The following is a 114-amino-acid chain: Fatty acid-binding protein, liver (114 aa).

This sequence belongs to the calycin superfamily. Fatty-acid binding protein (FABP) family. Post-translationally, the N-terminus is blocked.

It localises to the cytoplasm. FABPs are thought to play a role in the intracellular transport of long-chain fatty acids and their acyl-CoA esters. The sequence is that of Fatty acid-binding protein, liver from Lethenteron camtschaticum (Japanese lamprey).